Reading from the N-terminus, the 358-residue chain is uncharacterized protein (358 aa).

Residue 207–214 coordinates ATP; it reads AAVKDGKT.

This is an uncharacterized protein from Bacillus subtilis (strain 168).